A 328-amino-acid chain; its full sequence is Sin3 histone deacetylase corepressor complex component SDS3 (328 aa).

A disordered region spans residues 1–64 (MSAAALLAPA…TDLAKHDEED (64 aa)). Serine 2 is modified (N-acetylserine). Positions 2 to 170 (SAAALLAPAP…IENEKLTMEL (169 aa)) are mediates interaction with USP17L2. Pro residues predominate over residues 10–21 (APAPAGAPPAPE). Acidic residues-rich tracts occupy residues 23-37 (YPEE…EDDE) and 45-54 (SDEDTEDASE). Serine 32 and serine 45 each carry phosphoserine. At threonine 49 the chain carries Phosphothreonine. Residue serine 53 is modified to Phosphoserine. A coiled-coil region spans residues 64-171 (DFVEMKEQMY…ENEKLTMELT (108 aa)). Glycyl lysine isopeptide (Lys-Gly) (interchain with G-Cter in SUMO2) cross-links involve residues lysine 69, lysine 178, and lysine 201. The interval 226–252 (LKSPKRPASPSSPEHLPTTPAESPAQR) is disordered. Serine 228, serine 234, and serine 237 each carry phosphoserine. Position 244 is a phosphothreonine (threonine 244).

It belongs to the SDS3 family. As to quaternary structure, homodimer. Component of the SIN3 histone deacetylase (HDAC) corepressor complex. Interacts with SIN3A. Interaction with SIN3B enhances the interaction between SIN3B and HDAC1 to form a complex. Interacts with HCFC1. Component of a mSin3A corepressor complex that contains SIN3A, SAP130, SUDS3/SAP45, ARID4B/SAP180, HDAC1 and HDAC2. Interacts with USP17L2; the interaction is direct. Interacts with FOXK2. Post-translationally, polyubiquitinated. 'Lys-63'-polyubiquitinated SUDS3 positively regulates histone deacetylation. Regulated through deubiquitination by USP17L2/USP17 that cleaves 'Lys-63'-linked ubiquitin chains.

It is found in the nucleus. Functionally, regulatory protein which represses transcription and augments histone deacetylase activity of HDAC1. May have a potential role in tumor suppressor pathways through regulation of apoptosis. May function in the assembly and/or enzymatic activity of the mSin3A corepressor complex or in mediating interactions between the complex and other regulatory complexes. This is Sin3 histone deacetylase corepressor complex component SDS3 (SUDS3) from Bos taurus (Bovine).